We begin with the raw amino-acid sequence, 369 residues long: GTPase Obg (369 aa).

Residues 1–159 form the Obg domain; it reads MKFIDEAKIE…RELRLELKVL (159 aa). Positions 128 to 148 are disordered; the sequence is IHFKSSTNRAPRQKSEGKEGE. The OBG-type G domain maps to 160 to 333; it reads ADIGLLGMPN…LVTEIYDYIA (174 aa). GTP-binding positions include 166 to 173, 191 to 195, 213 to 216, 283 to 286, and 314 to 316; these read GMPNAGKS, FTTLH, DIPG, NKLD, and SAL. S173 and T193 together coordinate Mg(2+).

The protein belongs to the TRAFAC class OBG-HflX-like GTPase superfamily. OBG GTPase family. In terms of assembly, monomer. It depends on Mg(2+) as a cofactor.

It localises to the cytoplasm. Its function is as follows. An essential GTPase which binds GTP, GDP and possibly (p)ppGpp with moderate affinity, with high nucleotide exchange rates and a fairly low GTP hydrolysis rate. Plays a role in control of the cell cycle, stress response, ribosome biogenesis and in those bacteria that undergo differentiation, in morphogenesis control. In Herminiimonas arsenicoxydans, this protein is GTPase Obg.